Here is a 415-residue protein sequence, read N- to C-terminus: Serine--tRNA ligase (415 aa).

231–233 (TAE) contacts L-serine. 262–264 (RSE) lines the ATP pocket. Glu-285 contributes to the L-serine binding site. Residue 349–352 (EISS) coordinates ATP. Ser-383 serves as a coordination point for L-serine.

This sequence belongs to the class-II aminoacyl-tRNA synthetase family. Type-1 seryl-tRNA synthetase subfamily. As to quaternary structure, homodimer. The tRNA molecule binds across the dimer.

The protein resides in the cytoplasm. It carries out the reaction tRNA(Ser) + L-serine + ATP = L-seryl-tRNA(Ser) + AMP + diphosphate + H(+). It catalyses the reaction tRNA(Sec) + L-serine + ATP = L-seryl-tRNA(Sec) + AMP + diphosphate + H(+). It participates in aminoacyl-tRNA biosynthesis; selenocysteinyl-tRNA(Sec) biosynthesis; L-seryl-tRNA(Sec) from L-serine and tRNA(Sec): step 1/1. Its function is as follows. Catalyzes the attachment of serine to tRNA(Ser). Is also able to aminoacylate tRNA(Sec) with serine, to form the misacylated tRNA L-seryl-tRNA(Sec), which will be further converted into selenocysteinyl-tRNA(Sec). This Helicobacter pylori (strain J99 / ATCC 700824) (Campylobacter pylori J99) protein is Serine--tRNA ligase.